Consider the following 111-residue polypeptide: Large ribosomal subunit protein eL31 (111 aa).

The protein belongs to the eukaryotic ribosomal protein eL31 family.

The protein is Large ribosomal subunit protein eL31 (RPL31) of Tetrahymena thermophila (strain SB210).